The chain runs to 184 residues: Shikimate kinase (184 aa).

17 to 22 provides a ligand contact to ATP; it reads GAGKTT. Residue threonine 21 participates in Mg(2+) binding. Aspartate 39, arginine 63, and glycine 85 together coordinate substrate. Arginine 123 provides a ligand contact to ATP. A substrate-binding site is contributed by arginine 142.

Belongs to the shikimate kinase family. In terms of assembly, monomer. It depends on Mg(2+) as a cofactor.

It is found in the cytoplasm. It catalyses the reaction shikimate + ATP = 3-phosphoshikimate + ADP + H(+). It participates in metabolic intermediate biosynthesis; chorismate biosynthesis; chorismate from D-erythrose 4-phosphate and phosphoenolpyruvate: step 5/7. Catalyzes the specific phosphorylation of the 3-hydroxyl group of shikimic acid using ATP as a cosubstrate. In Burkholderia pseudomallei (strain 1710b), this protein is Shikimate kinase.